A 185-amino-acid polypeptide reads, in one-letter code: Ribosome-recycling factor (185 aa).

The protein belongs to the RRF family.

The protein localises to the cytoplasm. Its function is as follows. Responsible for the release of ribosomes from messenger RNA at the termination of protein biosynthesis. May increase the efficiency of translation by recycling ribosomes from one round of translation to another. This Corynebacterium kroppenstedtii (strain DSM 44385 / JCM 11950 / CIP 105744 / CCUG 35717) protein is Ribosome-recycling factor.